The following is a 506-amino-acid chain: Trans-cinnamate 4-monooxygenase (506 aa).

A helical membrane pass occupies residues 3–23 (LLLLEKTLLALFIAATIAVTI). Residues 213–218 (RSRLAQ) and alanine 307 contribute to the (E)-cinnamate site. Cysteine 448 contributes to the heme binding site.

This sequence belongs to the cytochrome P450 family. Heme is required as a cofactor.

It localises to the membrane. The catalysed reaction is (E)-cinnamate + reduced [NADPH--hemoprotein reductase] + O2 = (E)-4-coumarate + oxidized [NADPH--hemoprotein reductase] + H2O + H(+). The protein operates within phenylpropanoid metabolism; trans-4-coumarate biosynthesis; trans-4-coumarate from trans-cinnamate: step 1/1. Functionally, catalyzes the first oxidative step of the phenylpropanoid pathway in higher plants by transforming trans-cinnamate into p-coumarate. The compounds formed by this pathway are essential components for lignification, pollination, and defense against ultraviolet light, predators and pathogens. This is Trans-cinnamate 4-monooxygenase (CYP73A3) from Medicago sativa (Alfalfa).